Reading from the N-terminus, the 899-residue chain is Bifunctional uridylyltransferase/uridylyl-removing enzyme (899 aa).

A uridylyltransferase region spans residues 1–347 (MFISDPTDSL…PESERPEKSV (347 aa)). The interval 348-718 (LNARFNRVGD…EHRELALDAV (371 aa)) is uridylyl-removing. In terms of domain architecture, HD spans 465-581 (VDAHILLLIR…TKFANLVGNV (117 aa)). ACT domains are found at residues 719 to 804 (QIFI…RLPR) and 827 to 899 (VMSL…TPSC).

Belongs to the GlnD family. It depends on Mg(2+) as a cofactor.

The catalysed reaction is [protein-PII]-L-tyrosine + UTP = [protein-PII]-uridylyl-L-tyrosine + diphosphate. It catalyses the reaction [protein-PII]-uridylyl-L-tyrosine + H2O = [protein-PII]-L-tyrosine + UMP + H(+). With respect to regulation, uridylyltransferase (UTase) activity is inhibited by glutamine, while glutamine activates uridylyl-removing (UR) activity. Functionally, modifies, by uridylylation and deuridylylation, the PII regulatory proteins (GlnB and homologs), in response to the nitrogen status of the cell that GlnD senses through the glutamine level. Under low glutamine levels, catalyzes the conversion of the PII proteins and UTP to PII-UMP and PPi, while under higher glutamine levels, GlnD hydrolyzes PII-UMP to PII and UMP (deuridylylation). Thus, controls uridylylation state and activity of the PII proteins, and plays an important role in the regulation of nitrogen assimilation and metabolism. This chain is Bifunctional uridylyltransferase/uridylyl-removing enzyme, found in Psychrobacter sp. (strain PRwf-1).